The following is a 185-amino-acid chain: Peptidoglycan-recognition protein SC1a (185 aa).

The first 21 residues, 1–21, serve as a signal peptide directing secretion; it reads MVSKVALLLAVLVCSQYMAQG. Residues 46–170 form the N-acetylmuramoyl-L-alanine amidase domain; the sequence is SYAIIHHTAG…RQVSATECPG (125 aa). Residue histidine 51 participates in Zn(2+) binding. Cysteine 58 and cysteine 64 are joined by a disulfide. Residues histidine 160 and cysteine 168 each contribute to the Zn(2+) site.

It belongs to the N-acetylmuramoyl-L-alanine amidase 2 family. It depends on Zn(2+) as a cofactor.

Its subcellular location is the secreted. The catalysed reaction is Hydrolyzes the link between N-acetylmuramoyl residues and L-amino acid residues in certain cell-wall glycopeptides.. Its function is as follows. N-acetylmuramyl-L-alanine amidase involved in innate immunity by degrading bacterial peptidoglycans (PGN). Plays a scavenger role by digesting biologically active PGN into biologically inactive fragments. Has no direct bacteriolytic activity. The protein is Peptidoglycan-recognition protein SC1a of Drosophila melanogaster (Fruit fly).